We begin with the raw amino-acid sequence, 537 residues long: Tyrosine-protein phosphatase CDC14 homolog (537 aa).

Residues 182–345 enclose the Tyrosine-protein phosphatase domain; that stretch reads DFNWISPKFI…QVHFRAYFYE (164 aa). The active-site Phosphocysteine intermediate is C286. A disordered region spans residues 359–537; that stretch reads EPLATPPRHP…PKPSKSRLIS (179 aa). Polar residues predominate over residues 370-382; it reads NATNGTSQSNIST. Residues 400–411 show a composition bias toward low complexity; sequence PPSARRLPSASS. Residues 421–437 are compositionally biased toward polar residues; that stretch reads ASKQSIQNENKASYSSY. Phosphothreonine is present on T453. Residues S468 and S470 each carry the phosphoserine modification. Low complexity predominate over residues 490–502; the sequence is RRTSGNRWSSGSS. The residue at position 513 (S513) is a Phosphoserine. Over residues 514–523 the composition is skewed to polar residues; it reads MSSLNNTSNG. Basic residues predominate over residues 526–537; the sequence is AKPKPSKSRLIS.

The protein belongs to the protein-tyrosine phosphatase family. Non-receptor class CDC14 subfamily. As to quaternary structure, interacts with ark1 at the kinetochores. Interacts with bir1, cdc25, mid1, nbl1, pic1, and rad24. Phosphorylated by cds1, chk1, pmk1, and cdc2 upon Hydroxylurea and H(2)O(2) stress treatment. Phosphorylation regulates the nucleolar-to-nucleoplasmic transition. Is able to autodephosphorylate.

The protein resides in the nucleus. It localises to the nucleolus. It is found in the cytoplasm. The protein localises to the cytoskeleton. Its subcellular location is the microtubule organizing center. The protein resides in the spindle pole body. It carries out the reaction O-phospho-L-tyrosyl-[protein] + H2O = L-tyrosyl-[protein] + phosphate. In terms of biological role, protein phosphatase which antagonizes mitotic cyclin-dependent kinase cdc2, the inactivation of which is essential for exit from mitosis. To access its substrates, is released from nucleolar sequestration during mitosis. Plays an essential in coordinating the nuclear division cycle with cytokinesis through the cytokinesis checkpoint. Involved in chromosome segregation, where it is required for meiosis I spindle dissambly as well as for establishing two consecutive chromosome segregation phases. Allows damaged actomyosin rings to be maintained to facilitate completion of cell division in response to minor perturbation of the cell division machinery. Dephosphorylates the mitotic inducer cdc25 for its rapid degradation. Down-regulation of cdc25 activity ensures a prompt inactivation of mitotic cdc2 complexes to trigger cell division. Also dephosphorylates cdc2-phosphorylated nsk1, allowing nsk1-binding to kinetochores and spindle. Dephosphorylates ase1, which is essential for spindle midzone assembly and for continuous extension of the anaphase spindle. Tethered to the contractile ring by mid1, where it dephosphorylates cdc15. The chain is Tyrosine-protein phosphatase CDC14 homolog (clp1) from Schizosaccharomyces pombe (strain 972 / ATCC 24843) (Fission yeast).